An 868-amino-acid polypeptide reads, in one-letter code: Leucine--tRNA ligase (868 aa).

Positions 42-52 (PYPSGKLHMGH) match the 'HIGH' region motif. The 'KMSKS' region signature appears at 624-628 (TMSKS). ATP is bound at residue Lys-627.

It belongs to the class-I aminoacyl-tRNA synthetase family.

The protein localises to the cytoplasm. It catalyses the reaction tRNA(Leu) + L-leucine + ATP = L-leucyl-tRNA(Leu) + AMP + diphosphate. This is Leucine--tRNA ligase from Nitrosomonas eutropha (strain DSM 101675 / C91 / Nm57).